Reading from the N-terminus, the 127-residue chain is Large ribosomal subunit protein bL17 (127 aa).

Belongs to the bacterial ribosomal protein bL17 family. Part of the 50S ribosomal subunit. Contacts protein L32.

The polypeptide is Large ribosomal subunit protein bL17 (Pediococcus pentosaceus (strain ATCC 25745 / CCUG 21536 / LMG 10740 / 183-1w)).